The following is a 323-amino-acid chain: Ribosomal protein L11 methyltransferase (323 aa).

S-adenosyl-L-methionine is bound by residues threonine 160, glycine 184, aspartate 206, and asparagine 257.

It belongs to the methyltransferase superfamily. PrmA family.

The protein localises to the cytoplasm. It catalyses the reaction L-lysyl-[protein] + 3 S-adenosyl-L-methionine = N(6),N(6),N(6)-trimethyl-L-lysyl-[protein] + 3 S-adenosyl-L-homocysteine + 3 H(+). Its function is as follows. Methylates ribosomal protein L11. This Agathobacter rectalis (strain ATCC 33656 / DSM 3377 / JCM 17463 / KCTC 5835 / VPI 0990) (Eubacterium rectale) protein is Ribosomal protein L11 methyltransferase.